Reading from the N-terminus, the 546-residue chain is Chaperonin GroEL (546 aa).

ATP-binding positions include 30 to 33 (TLGP), lysine 51, 87 to 91 (DGTTT), glycine 415, 479 to 481 (NAA), and aspartate 495.

Belongs to the chaperonin (HSP60) family. Forms a cylinder of 14 subunits composed of two heptameric rings stacked back-to-back. Interacts with the co-chaperonin GroES.

The protein resides in the cytoplasm. It carries out the reaction ATP + H2O + a folded polypeptide = ADP + phosphate + an unfolded polypeptide.. Functionally, together with its co-chaperonin GroES, plays an essential role in assisting protein folding. The GroEL-GroES system forms a nano-cage that allows encapsulation of the non-native substrate proteins and provides a physical environment optimized to promote and accelerate protein folding. This Bordetella avium (strain 197N) protein is Chaperonin GroEL.